The sequence spans 269 residues: Enoyl-[acyl-carrier-protein] reductase [NADH] (269 aa).

NAD(+) is bound by residues 20–21, 64–65, and 95–96; these read SI, DV, and IG. Position 158 (Y158) interacts with substrate. Residues K165 and I194 each coordinate NAD(+).

This sequence belongs to the short-chain dehydrogenases/reductases (SDR) family. FabI subfamily. In terms of assembly, homodimer. Homotetramer.

The catalysed reaction is a 2,3-saturated acyl-[ACP] + NAD(+) = a (2E)-enoyl-[ACP] + NADH + H(+). The enzyme catalyses a 2,3-saturated acyl-CoA + NAD(+) = a (2E)-enoyl-CoA + NADH + H(+). Its pathway is lipid metabolism; mycolic acid biosynthesis. Its function is as follows. Enoyl-ACP reductase of the type II fatty acid syntase (FAS-II) system, which is involved in the biosynthesis of mycolic acids, a major component of mycobacterial cell walls. Catalyzes the NADH-dependent reduction of the double bond of 2-trans-enoyl-[acyl-carrier protein], an essential step in the fatty acid elongation cycle of the FAS-II pathway. Shows preference for long-chain fatty acyl thioester substrates, and can also use 2-trans-enoyl-CoAs as alternative substrates. The mycobacterial FAS-II system utilizes the products of the FAS-I system as primers to extend fatty acyl chain lengths up to C56, forming the meromycolate chain that serves as the precursor for final mycolic acids. Is the primary target of the first-line antitubercular drug isoniazid (INH) and of the second-line drug ethionamide (ETH). Overexpressed inhA confers INH and ETH resistance to M.bovis. The mechanism of isoniazid action against InhA is covalent attachment of the activated form of the drug to the nicotinamide ring of NAD and binding of the INH-NAD adduct to the active site of InhA. Similarly, the ETH-NAD adduct binds InhA. This Mycobacterium bovis (strain ATCC BAA-935 / AF2122/97) protein is Enoyl-[acyl-carrier-protein] reductase [NADH].